The chain runs to 1484 residues: Cystic fibrosis transmembrane conductance regulator (1484 aa).

Over 1–77 (MQRSPLEKAS…KLINALRRCF (77 aa)) the chain is Cytoplasmic. The chain crosses the membrane as a helical span at residues 78–98 (FWRFMFYGIILYLGEVTKSVQ). The ABC transmembrane type-1 1 domain maps to 81-365 (FMFYGIILYL…WAVQTWYDSL (285 aa)). Residues 99–122 (PLLLGRIIASYDPDNKEERSIAIY) are Extracellular-facing. A helical transmembrane segment spans residues 123 to 146 (LGIGLCLLFVMRTLLLHPAIFGLH). Residues 147 to 195 (RIGMQMRIAMFSLIYKKTLKLSSRVLDKISIGQLVSLLSNNLNKFDEGL) are Cytoplasmic-facing. A helical transmembrane segment spans residues 196 to 216 (ALAHFVWIAPLQVTLLMGLLW). The Extracellular segment spans residues 217 to 222 (DLLQAS). A helical transmembrane segment spans residues 223-243 (AFCGLAFLIVLALFQAGLGRM). The Cytoplasmic segment spans residues 244-298 (MMKYRDQRAGKINERLVITSEMIENIQSVKAYCWEEAMEKMIESIRQTELKLTRK). The helical transmembrane segment at 299 to 319 (AAYVRYFNSSAFFFSGFFVVF) threads the bilayer. Over 320-339 (LSVLPYALIKTIVLRKIFTT) the chain is Extracellular. Residues 340–358 (ISFCIVLRMAVTRQFPWAV) traverse the membrane as a helical segment. Over 359–860 (QTWYDSLGAI…YLRYVTIHKS (502 aa)) the chain is Cytoplasmic. ATP is bound by residues Trp-401, Ser-434, 458-465 (GSTGAGKT), and Gln-493. The region spanning 423–646 (NADNSLFFSN…RPDFSSKLMG (224 aa)) is the ABC transporter 1 domain. The S-palmitoyl cysteine moiety is linked to residue Cys-524. Phosphoserine is present on residues Ser-549 and Ser-660. The interval 654-833 (SAERRNSIIT…EEINEEDLKE (180 aa)) is disordered R region. Ser-670 bears the Phosphoserine; by PKA mark. Residue Ser-686 is modified to Phosphoserine. Lys-688 participates in a covalent cross-link: Glycyl lysine isopeptide (Lys-Gly) (interchain with G-Cter in ubiquitin). Ser-700 and Ser-712 each carry phosphoserine. Residue Thr-717 is modified to Phosphothreonine. Phosphoserine is present on residues Ser-737, Ser-769, Ser-792, Ser-797, and Ser-815. A helical membrane pass occupies residues 861-881 (LVFVLIWCLVIFLAEVAISLV). Residues 861 to 1157 (LVFVLIWCLV…AVNSSIDVDS (297 aa)) form the ABC transmembrane type-1 2 domain. Residues 882 to 920 (VLWLLKKTASQDKGNSTQSINSSYTVIFTSTSTYYVFYI) lie on the Extracellular side of the membrane. Asn-896 and Asn-902 each carry an N-linked (GlcNAc...) asparagine glycan. The discontinuously helical transmembrane segment at 921 to 941 (YVGVADTLLALGFFRGLPLVH) threads the bilayer. Residues 942–992 (TLITVSKILHHKMLHAVLQAPMSTLNALKAGGILNRFSKDIAILDDLLPLT) lie on the Cytoplasmic side of the membrane. A helical transmembrane segment spans residues 993-1013 (IFDFVQLLLIVIGAVTVVSAL). Residues 1014 to 1015 (QP) lie on the Extracellular side of the membrane. A helical membrane pass occupies residues 1016 to 1036 (YIFLATVPVIAAFIMLRAYFL). Topologically, residues 1037-1097 (HTSQQLKQLE…TANWFLYLST (61 aa)) are cytoplasmic. A helical membrane pass occupies residues 1098-1118 (LRWFQMRMEIIFVIFFIAITF). The Extracellular segment spans residues 1119–1132 (ISILTTGEGVGAVG). Residues 1133 to 1153 (IILTLAMNIMGTLQWAVNSSI) traverse the membrane as a helical segment. Over 1154-1484 (DVDSLMRSVS…TEEEVQETRL (331 aa)) the chain is Cytoplasmic. Residues 1214-1447 (MTVKDLTAKY…KSLFRQAISP (234 aa)) form the ABC transporter 2 domain. ATP contacts are provided by residues Tyr-1223 and 1248–1255 (GRTGSGKS). Positions 1390–1484 (RTLKQAFADC…TEEEVQETRL (95 aa)) are interaction with GORASP2. Cys-1399 carries the S-palmitoyl cysteine lipid modification. Ser-1448 and Ser-1460 each carry phosphoserine. The span at 1456 to 1465 (HRNSSKHKSR) shows a compositional bias: basic residues. A disordered region spans residues 1456–1484 (HRNSSKHKSRSQIAALKEETEEEVQETRL). Residues 1474–1484 (ETEEEVQETRL) show a composition bias toward acidic residues. The PDZ-binding signature appears at 1482-1484 (TRL).

This sequence belongs to the ABC transporter superfamily. ABCC family. CFTR transporter (TC 3.A.1.202) subfamily. Monomer; does not require oligomerization for channel activity. May form oligomers in the membrane. Interacts with SLC26A3, SLC26A6 and NHERF1. Interacts with SHANK2. Interacts with MYO6. Interacts (via C-terminus) with GOPC (via PDZ domain); this promotes CFTR internalization and thereby decreases channel activity. Interacts with SLC4A7 through NHERF1. Found in a complex with MYO5B and RAB11A. Interacts with ANO1. Interacts with SLC26A8. Interacts with AHCYL1; the interaction increases CFTR activity. Interacts with CSE1L. The core-glycosylated form interacts with GORASP2 (via PDZ GRASP-type 1 domain) in respone to ER stress. Interacts with MARCHF2; the interaction leads to CFTR ubiqtuitination and degradation. Interacts with ADGRG2. Post-translationally, N-glycosylated. Phosphorylated; cAMP treatment promotes phosphorylation and activates the channel. Dephosphorylation decreases the ATPase activity (in vitro). Phosphorylation at PKA sites activates the channel. Phosphorylation at PKC sites enhances the response to phosphorylation by PKA. Phosphorylated by AMPK; this inhibits channel activity. In terms of processing, ubiquitinated, leading to its degradation in the lysosome. Deubiquitination by USP10 in early endosomes enhances its endocytic recycling to the cell membrane. Ubiquitinated by RNF185 during ER stress. Ubiquitinated by MARCHF2.

The protein localises to the apical cell membrane. It is found in the early endosome membrane. The protein resides in the cell membrane. It localises to the recycling endosome membrane. Its subcellular location is the endoplasmic reticulum membrane. The protein localises to the nucleus. It carries out the reaction ATP + H2O + closed Cl(-) channel = ADP + phosphate + open Cl(-) channel.. It catalyses the reaction chloride(in) = chloride(out). The catalysed reaction is hydrogencarbonate(in) = hydrogencarbonate(out). The enzyme catalyses ATP + H2O = ADP + phosphate + H(+). Functionally, epithelial ion channel that plays an important role in the regulation of epithelial ion and water transport and fluid homeostasis. Mediates the transport of chloride ions across the cell membrane. Possesses an intrinsic ATPase activity and utilizes ATP to gate its channel; the passive flow of anions through the channel is gated by cycles of ATP binding and hydrolysis by the ATP-binding domains. The ion channel is also permeable to HCO(3)(-); selectivity depends on the extracellular chloride concentration. Exerts its function also by modulating the activity of other ion channels and transporters. Contributes to the regulation of the pH and the ion content of the epithelial fluid layer. Modulates the activity of the epithelial sodium channel (ENaC) complex, in part by regulating the cell surface expression of the ENaC complex. May regulate bicarbonate secretion and salvage in epithelial cells by regulating the transporter SLC4A7. Can inhibit the chloride channel activity of ANO1. Plays a role in the chloride and bicarbonate homeostasis during sperm epididymal maturation and capacitation. The protein is Cystic fibrosis transmembrane conductance regulator of Mustela putorius furo (European domestic ferret).